The sequence spans 341 residues: tRNA N6-adenosine threonylcarbamoyltransferase (341 aa).

Residues H115 and H119 each contribute to the Fe cation site. Substrate-binding positions include 137–141 (AVSGG), D170, G183, D187, and N276. D306 contacts Fe cation.

This sequence belongs to the KAE1 / TsaD family. The cofactor is Fe(2+).

Its subcellular location is the cytoplasm. It carries out the reaction L-threonylcarbamoyladenylate + adenosine(37) in tRNA = N(6)-L-threonylcarbamoyladenosine(37) in tRNA + AMP + H(+). In terms of biological role, required for the formation of a threonylcarbamoyl group on adenosine at position 37 (t(6)A37) in tRNAs that read codons beginning with adenine. Is involved in the transfer of the threonylcarbamoyl moiety of threonylcarbamoyl-AMP (TC-AMP) to the N6 group of A37, together with TsaE and TsaB. TsaD likely plays a direct catalytic role in this reaction. The chain is tRNA N6-adenosine threonylcarbamoyltransferase from Lacticaseibacillus casei (strain BL23) (Lactobacillus casei).